The sequence spans 248 residues: Pyruvate formate-lyase-activating enzyme (248 aa).

Residues 17–248 form the Radical SAM core domain; sequence VDGPGIRFIV…NKILETSSYK (232 aa). [4Fe-4S] cluster is bound by residues Cys31, Cys35, and Cys38. S-adenosyl-L-methionine is bound by residues 37 to 39, Gly80, 135 to 137, and His208; these read FCH and DIK.

It belongs to the organic radical-activating enzymes family. [4Fe-4S] cluster is required as a cofactor.

It localises to the cytoplasm. It carries out the reaction glycyl-[formate C-acetyltransferase] + reduced [flavodoxin] + S-adenosyl-L-methionine = glycin-2-yl radical-[formate C-acetyltransferase] + semiquinone [flavodoxin] + 5'-deoxyadenosine + L-methionine + H(+). Activation of pyruvate formate-lyase under anaerobic conditions by generation of an organic free radical, using S-adenosylmethionine and reduced flavodoxin as cosubstrates to produce 5'-deoxy-adenosine. The chain is Pyruvate formate-lyase-activating enzyme (pflA) from Listeria innocua serovar 6a (strain ATCC BAA-680 / CLIP 11262).